The following is a 254-amino-acid chain: Probable electron transfer flavoprotein subunit beta (254 aa).

The protein belongs to the ETF beta-subunit/FixA family. As to quaternary structure, heterodimer of an alpha and a beta subunit. It depends on FAD as a cofactor. Requires AMP as cofactor.

The protein resides in the mitochondrion matrix. Functionally, the electron transfer flavoprotein serves as a specific electron acceptor for several dehydrogenases, including five acyl-CoA dehydrogenases, glutaryl-CoA and sarcosine dehydrogenase. It transfers the electrons to the main mitochondrial respiratory chain via ETF-ubiquinone oxidoreductase (ETF dehydrogenase). The sequence is that of Probable electron transfer flavoprotein subunit beta from Schizosaccharomyces pombe (strain 972 / ATCC 24843) (Fission yeast).